Consider the following 520-residue polypeptide: Putative hydrolase Mb2247c (520 aa).

Residues 1 to 34 form the signal peptide; sequence MAAMWRRRPLSSALLSFGLLLGGLPLAAPPLAGA. The chain crosses the membrane as a helical span at residues 104 to 124; it reads FGALLVNPGGPGASAVDMVAA. One can recognise an AB hydrolase-1 domain in the interval 105 to 403; sequence GALLVNPGGP…APTPADPAAW (299 aa). Ser-232 serves as the catalytic Nucleophile. The active site involves Asp-461. His-488 functions as the Proton donor in the catalytic mechanism.

This sequence belongs to the peptidase S33 family.

Its subcellular location is the cell membrane. This chain is Putative hydrolase Mb2247c, found in Mycobacterium bovis (strain ATCC BAA-935 / AF2122/97).